Consider the following 877-residue polypeptide: MEDKNRLLLIDGSSVAFRAFFALYNQLDRFKAPNGLHTNAIFAFHTMLSSLMERIQPTHVLIAFDAGKTTFRTEMFADYKGGRSKTPDEFREQLPFIKEMIEKLGIRHYELANYEADDIIGTLDKMAEAPDVNFDVTIVTGDKDMIQLVDGNTRVEISKKGVAEFEEFTPDYLLEKMGLTPSQFIDLKALMGDSSDNYPGVTKVGEKTGLKLLQEFGSLENLYENVETLKASKMKDNLIADKEMAFLSQQLATINTKAPLEIGLEDTLLKEKNVAELGQFYDEMGFSQFKSKLLADGGGEVTDETVSEEIKFEIVTDKSSVASVNADDFFYLETLGENYHREQIVAFAWGNSEKIYVSKNLDLLTEMKFPENTYDFKKNRVLLSHLNIELPLVKFDAMLAKYLISTTEDNKISTIARLFDVGHLATDEEIFGKGTKLALPDDEILFDHLARKIRVLARAKEKMMAELIENEQEHLLSDMELPLAEVLAKMEITGISVSQNTLEEIGAENEEKLASLTREIYDLAGEEFNINSPKQLGVILFEKLQLPVGKKTKTGYSTAVDVLEDLAALSPVVAKILEYRQINKVQSTYVKGLIPQIADDGKIHTRYVQDLTQTGRLSSVDPNLQNIPVRLEEGRKIRKAFVPSQDSLLLSSDYSQIELRVLAHISADEHLIDAFKHGADIHTSTAMRVFGIEKAEDVTANDRRNAKAVNFGVVYGISDFGLARNLGITRKDAKNYIETYFERYPGIKTYMENIVREARDKGFVETMSHRRRKIPDINARNFNVRGFAERTAINSPIQGSAADILKIAMINLDKALTERQSKSKLLLQVHDEIILDVPLEELEDIKALVKQTMEEAIELAVPLKVDDNTGKTWYEAK.

The 5'-3' exonuclease domain occupies 180–272 (TPSQFIDLKA…GLEDTLLKEK (93 aa)). Residues 312 to 468 (FEIVTDKSSV…AKEKMMAELI (157 aa)) enclose the 3'-5' exonuclease domain.

This sequence belongs to the DNA polymerase type-A family. In terms of assembly, single-chain monomer with multiple functions.

It catalyses the reaction DNA(n) + a 2'-deoxyribonucleoside 5'-triphosphate = DNA(n+1) + diphosphate. Its function is as follows. In addition to polymerase activity, this DNA polymerase exhibits 3'-5' and 5'-3' exonuclease activity. The sequence is that of DNA polymerase I (polA) from Lactococcus lactis subsp. cremoris (strain MG1363).